A 502-amino-acid chain; its full sequence is 2,3-bisphosphoglycerate-independent phosphoglycerate mutase (502 aa).

Residues Asp12 and Ser62 each contribute to the Mn(2+) site. Catalysis depends on Ser62, which acts as the Phosphoserine intermediate. Substrate is bound by residues His123, 152–153, Arg183, Arg189, 255–258, and Lys329; these read RD and RPDR. Mn(2+) is bound by residues Asp394, His398, Asp435, His436, and His453.

The protein belongs to the BPG-independent phosphoglycerate mutase family. In terms of assembly, monomer. It depends on Mn(2+) as a cofactor.

It carries out the reaction (2R)-2-phosphoglycerate = (2R)-3-phosphoglycerate. The protein operates within carbohydrate degradation; glycolysis; pyruvate from D-glyceraldehyde 3-phosphate: step 3/5. Catalyzes the interconversion of 2-phosphoglycerate and 3-phosphoglycerate. In Malacoplasma penetrans (strain HF-2) (Mycoplasma penetrans), this protein is 2,3-bisphosphoglycerate-independent phosphoglycerate mutase.